The primary structure comprises 123 residues: Small ribosomal subunit protein uS12 (123 aa).

The disordered stretch occupies residues 1–29; the sequence is MPTINQLIRKKRQSSASRKKSPALQKCPQ. A compositionally biased stretch (basic residues) spans 8-21; that stretch reads IRKKRQSSASRKKS. D89 bears the 3-methylthioaspartic acid mark.

It belongs to the universal ribosomal protein uS12 family. Part of the 30S ribosomal subunit. Contacts proteins S8 and S17. May interact with IF1 in the 30S initiation complex.

Functionally, with S4 and S5 plays an important role in translational accuracy. Its function is as follows. Interacts with and stabilizes bases of the 16S rRNA that are involved in tRNA selection in the A site and with the mRNA backbone. Located at the interface of the 30S and 50S subunits, it traverses the body of the 30S subunit contacting proteins on the other side and probably holding the rRNA structure together. The combined cluster of proteins S8, S12 and S17 appears to hold together the shoulder and platform of the 30S subunit. The protein is Small ribosomal subunit protein uS12 of Chlamydia abortus (strain DSM 27085 / S26/3) (Chlamydophila abortus).